The following is a 209-amino-acid chain: Kynurenine formamidase (209 aa).

F19 is a substrate binding site. Zn(2+) is bound by residues H49, H53, and D55. The Proton donor/acceptor role is filled by H59. 2 residues coordinate Zn(2+): H160 and E172.

The protein belongs to the Cyclase 1 superfamily. KynB family. Homodimer. It depends on Zn(2+) as a cofactor.

It carries out the reaction N-formyl-L-kynurenine + H2O = L-kynurenine + formate + H(+). It functions in the pathway amino-acid degradation; L-tryptophan degradation via kynurenine pathway; L-kynurenine from L-tryptophan: step 2/2. In terms of biological role, catalyzes the hydrolysis of N-formyl-L-kynurenine to L-kynurenine, the second step in the kynurenine pathway of tryptophan degradation. The chain is Kynurenine formamidase from Delftia acidovorans (strain DSM 14801 / SPH-1).